The following is a 211-amino-acid chain: Beta-crystallin B3 (211 aa).

Met1 carries the post-translational modification N-acetylmethionine. The residue at position 2 (Ala2) is an N-acetylalanine; in Beta-crystallin B3, N-terminally processed. The N-terminal arm stretch occupies residues 2–23 (AEQHGAPEQAAAGKSHGGLGGS). Beta/gamma crystallin 'Greek key' domains lie at 24–63 (YKVT…QVES) and 64–108 (GPWL…RPLH). Positions 109-113 (IDGPD) are connecting peptide. Beta/gamma crystallin 'Greek key' domains follow at residues 114-155 (HKLH…RVIN) and 156-198 (GTWV…RRIR). A C-terminal arm region spans residues 200–211 (QKWHKRGCFLSS).

Belongs to the beta/gamma-crystallin family. Homo/heterodimer, or complexes of higher-order. The structure of beta-crystallin oligomers seems to be stabilized through interactions between the N-terminal arms.

Crystallins are the dominant structural components of the vertebrate eye lens. This is Beta-crystallin B3 (Crybb3) from Mus musculus (Mouse).